The following is a 173-amino-acid chain: C-phycocyanin-2 beta subunit (173 aa).

Asparagine 73 carries the post-translational modification N4-methylasparagine. Cysteine 83 and cysteine 154 together coordinate (2R,3E)-phycocyanobilin.

This sequence belongs to the phycobiliprotein family. In terms of assembly, heterodimer of an alpha and a beta subunit, which further assembles into trimers and the trimers into hexamers. In terms of processing, contains two covalently linked bilin chromophores.

Its subcellular location is the cellular thylakoid membrane. Its function is as follows. Light-harvesting photosynthetic bile pigment-protein from the phycobiliprotein complex (phycobilisome, PBS). Phycocyanin is the major phycobiliprotein in the PBS rod. In Synechococcus sp. (strain ATCC 27144 / PCC 6301 / SAUG 1402/1) (Anacystis nidulans), this protein is C-phycocyanin-2 beta subunit (cpcB2).